A 452-amino-acid polypeptide reads, in one-letter code: Probable ECA polymerase (452 aa).

A run of 11 helical transmembrane segments spans residues 6–26 (FSGLLVVWLLSTLFIATLTWF), 37–57 (VFFSLLFLLTFFFGFPLTSVL), 63–83 (VGVAPPEILLQALLSAACFYG), 118–138 (VILMGIALVSVAIFFMHNGFL), 155–175 (GVALKRFFYFFIPAMLVVYFL), 181–201 (AWLFFLVSTVAFGLLTYMIVG), 207–227 (IIIAFAIFLFIGIIRGWISLW), 228–248 (MLAAAGVLGIVGMFWLALKRY), 341–361 (LVVMGGALFIPLGAIVVGLII), 378–398 (YKAAILHSFCFGAIFNMIVLA), and 410–430 (VFFLVVFGASLLVAKLLFWLF).

This sequence belongs to the WzyE family. As to quaternary structure, probably part of a complex composed of WzxE, WzyE and WzzE.

It localises to the cell inner membrane. Its pathway is bacterial outer membrane biogenesis; enterobacterial common antigen biosynthesis. Functionally, probably involved in the polymerization of enterobacterial common antigen (ECA) trisaccharide repeat units. The chain is Probable ECA polymerase from Salmonella heidelberg (strain SL476).